The chain runs to 438 residues: Chromosomal replication initiator protein DnaA (438 aa).

The tract at residues 1–68 (MKDNILSALK…VVKESLGKDA (68 aa)) is domain I, interacts with DnaA modulators. The domain II stretch occupies residues 68 to 98 (ATFEIVYKEIDITQENEEKGPLVRKRPLLIT). Residues 99–314 (PLNPKYTFEN…GAILKLIAYK (216 aa)) are domain III, AAA+ region. ATP is bound by residues glycine 142, glycine 144, lysine 145, and threonine 146. The segment at 315 to 438 (NLYGSLNLSI…TKNFAQGESI (124 aa)) is domain IV, binds dsDNA.

This sequence belongs to the DnaA family. In terms of assembly, oligomerizes as a right-handed, spiral filament on DNA at oriC.

The protein resides in the cytoplasm. Its function is as follows. Plays an essential role in the initiation and regulation of chromosomal replication. ATP-DnaA binds to the origin of replication (oriC) to initiate formation of the DNA replication initiation complex once per cell cycle. Binds the DnaA box (a 9 base pair repeat at the origin) and separates the double-stranded (ds)DNA. Forms a right-handed helical filament on oriC DNA; dsDNA binds to the exterior of the filament while single-stranded (ss)DNA is stabiized in the filament's interior. The ATP-DnaA-oriC complex binds and stabilizes one strand of the AT-rich DNA unwinding element (DUE), permitting loading of DNA polymerase. After initiation quickly degrades to an ADP-DnaA complex that is not apt for DNA replication. Binds acidic phospholipids. The sequence is that of Chromosomal replication initiator protein DnaA from Thermosipho africanus (strain TCF52B).